The primary structure comprises 144 residues: UPF0547 protein C16orf87 homolog (144 aa).

The tract at residues 33–112 (HAKQSQRLPP…EEKEKQEKEV (80 aa)) is disordered. The segment covering 35 to 45 (KQSQRLPPTSE) has biased composition (polar residues). Over residues 50–62 (PKRRRTERIKRER) the composition is skewed to basic residues. Composition is skewed to basic and acidic residues over residues 63–74 (IHTAVNRDLENR) and 99–112 (KKHE…EKEV). Residues 94 to 122 (KTATTKKHEEEKEKQEKEVDMYANLSDEK) are a coiled coil.

The protein belongs to the UPF0547 family.

This is UPF0547 protein C16orf87 homolog from Xenopus laevis (African clawed frog).